Reading from the N-terminus, the 372-residue chain is Glutamate 5-kinase (372 aa).

Residue lysine 14 coordinates ATP. Substrate contacts are provided by serine 54, aspartate 141, and asparagine 153. Residue 173–174 coordinates ATP; that stretch reads TD. The PUA domain maps to 280-358; the sequence is AGAVVLDNGA…ADIAAILGFV (79 aa).

It belongs to the glutamate 5-kinase family.

It is found in the cytoplasm. It carries out the reaction L-glutamate + ATP = L-glutamyl 5-phosphate + ADP. The protein operates within amino-acid biosynthesis; L-proline biosynthesis; L-glutamate 5-semialdehyde from L-glutamate: step 1/2. Catalyzes the transfer of a phosphate group to glutamate to form L-glutamate 5-phosphate. The chain is Glutamate 5-kinase from Janthinobacterium sp. (strain Marseille) (Minibacterium massiliensis).